The sequence spans 126 residues: Fluoride-specific ion channel FluC (126 aa).

4 consecutive transmembrane segments (helical) span residues 3-23, 37-57, 68-88, and 101-121; these read PYLL…RFLI, VGTL…ALYF, LVIT…LETV, and TNIT…MMLF. Na(+) contacts are provided by G75 and T78.

This sequence belongs to the fluoride channel Fluc/FEX (TC 1.A.43) family.

Its subcellular location is the cell inner membrane. The enzyme catalyses fluoride(in) = fluoride(out). Na(+) is not transported, but it plays an essential structural role and its presence is essential for fluoride channel function. In terms of biological role, fluoride-specific ion channel. Important for reducing fluoride concentration in the cell, thus reducing its toxicity. The chain is Fluoride-specific ion channel FluC from Sulfurovum sp. (strain NBC37-1).